The chain runs to 106 residues: ATP-dependent Clp protease adapter protein ClpS (106 aa).

The protein belongs to the ClpS family. In terms of assembly, binds to the N-terminal domain of the chaperone ClpA.

Involved in the modulation of the specificity of the ClpAP-mediated ATP-dependent protein degradation. The chain is ATP-dependent Clp protease adapter protein ClpS from Erwinia tasmaniensis (strain DSM 17950 / CFBP 7177 / CIP 109463 / NCPPB 4357 / Et1/99).